The chain runs to 367 residues: MHKFTGVNAKFQQPALRNLSPVVVEREREEFVGFFPQIVRDLTEDGIGHPEVGDAVARLKEVLQYNAPGGKCNRGLTVVAAYRELSGPGQKDAESLRCALAVGWCIELFQAFFLVADDIMDQSLTRRGQLCWYKKEGVGLDAINDSFLLESSVYRVLKKYCRQRPYYVHLLELFLQTAYQTELGQMLDLITAPVSKVDLSHFSEERYKAIVKYKTAFYSFYLPVAAAMYMVGIDSKEEHENAKAILLEMGEYFQIQDDYLDCFGDPALTGKVGTDIQDNKCSWLVVQCLQRVTPEQRQLLEDNYGRKEPEKVAKVKELYEAVGMRAAFQQYEESSYRRLQELIEKHSNRLPKEIFLGLAQKIYKRQK.

Positions 71, 74, and 110 each coordinate isopentenyl diphosphate. The Mg(2+) site is built by D117 and D121. Dimethylallyl diphosphate is bound at residue R126. Position 127 (R127) interacts with isopentenyl diphosphate. Dimethylallyl diphosphate is bound by residues K214, T215, Q254, K271, and K280.

Belongs to the FPP/GGPP synthase family. In terms of assembly, homodimer. Requires Mg(2+) as cofactor.

The protein resides in the cytoplasm. The enzyme catalyses isopentenyl diphosphate + dimethylallyl diphosphate = (2E)-geranyl diphosphate + diphosphate. The catalysed reaction is isopentenyl diphosphate + (2E)-geranyl diphosphate = (2E,6E)-farnesyl diphosphate + diphosphate. It functions in the pathway isoprenoid biosynthesis; farnesyl diphosphate biosynthesis; farnesyl diphosphate from geranyl diphosphate and isopentenyl diphosphate: step 1/1. Its pathway is isoprenoid biosynthesis; geranyl diphosphate biosynthesis; geranyl diphosphate from dimethylallyl diphosphate and isopentenyl diphosphate: step 1/1. Functionally, catalyzes the sequential condensation of isopentenyl pyrophosphate with the allylic pyrophosphates, dimethylallyl pyrophosphate, and then with the resultant geranylpyrophosphate to the ultimate product farnesyl pyrophosphate. The protein is Farnesyl pyrophosphate synthase (FDPS) of Gallus gallus (Chicken).